The following is a 143-amino-acid chain: MEKGEINFFSENDFVLNREQDYRNWIEKAIESENKYIGDISFIFCDDEYLHKINLEYLAHDTYTDIISFDNTLGNTLQGDIYISTERVQENANSFNTEFDEELKRVLIHGILHFCGFKDKTEREQELMRRKEEEKIALFHVEQ.

3 residues coordinate Zn(2+): His109, His113, and Asp119.

This sequence belongs to the endoribonuclease YbeY family. Requires Zn(2+) as cofactor.

The protein localises to the cytoplasm. Single strand-specific metallo-endoribonuclease involved in late-stage 70S ribosome quality control and in maturation of the 3' terminus of the 16S rRNA. This Christiangramia forsetii (strain DSM 17595 / CGMCC 1.15422 / KT0803) (Gramella forsetii) protein is Endoribonuclease YbeY.